A 513-amino-acid chain; its full sequence is Noroxomaritidine synthase 2 (513 aa).

Residues 14-34 traverse the membrane as a helical segment; that stretch reads HYPEILIAIACFLIFSLLLSA. Residue Cys-458 coordinates heme.

This sequence belongs to the cytochrome P450 family. Heme is required as a cofactor. Mostly expressed in stems, and, to a lower extent, in bulbs, roots, leaves and flowers.

It localises to the membrane. The enzyme catalyses 4'-O-methylnorbelladine + reduced [NADPH--hemoprotein reductase] + O2 = (10bR,4aS)-noroxomaritidine + oxidized [NADPH--hemoprotein reductase] + 2 H2O + H(+). It catalyses the reaction 4'-O-methylnorbelladine + reduced [NADPH--hemoprotein reductase] + O2 = (10bS,4aR)-noroxomaritidine + oxidized [NADPH--hemoprotein reductase] + 2 H2O + H(+). It participates in alkaloid biosynthesis. Functionally, cytochrome P450 that catalyzes an intramolecular para-para' C-C phenol coupling of 4'-O-methylnorbelladine in alkaloids biosynthesis, including haemanthamine- and crinamine-type alkaloids, promising anticancer agents. Catalyzes the formation of (10bR,4aS)-noroxomaritidine and (10bS,4aR)-noroxomaritidine from 4'-O-methylnorbelladine. This is Noroxomaritidine synthase 2 from Narcissus pseudonarcissus (Daffodil).